The primary structure comprises 162 residues: Crossover junction endodeoxyribonuclease RuvC (162 aa).

Catalysis depends on residues D8, E69, and H141. The Mg(2+) site is built by D8, E69, and H141.

Belongs to the RuvC family. As to quaternary structure, homodimer which binds Holliday junction (HJ) DNA. The HJ becomes 2-fold symmetrical on binding to RuvC with unstacked arms; it has a different conformation from HJ DNA in complex with RuvA. In the full resolvosome a probable DNA-RuvA(4)-RuvB(12)-RuvC(2) complex forms which resolves the HJ. Mg(2+) serves as cofactor.

The protein localises to the cytoplasm. The enzyme catalyses Endonucleolytic cleavage at a junction such as a reciprocal single-stranded crossover between two homologous DNA duplexes (Holliday junction).. The RuvA-RuvB-RuvC complex processes Holliday junction (HJ) DNA during genetic recombination and DNA repair. Endonuclease that resolves HJ intermediates. Cleaves cruciform DNA by making single-stranded nicks across the HJ at symmetrical positions within the homologous arms, yielding a 5'-phosphate and a 3'-hydroxyl group; requires a central core of homology in the junction. The consensus cleavage sequence is 5'-(A/T)TT(C/G)-3'. Cleavage occurs on the 3'-side of the TT dinucleotide at the point of strand exchange. HJ branch migration catalyzed by RuvA-RuvB allows RuvC to scan DNA until it finds its consensus sequence, where it cleaves and resolves the cruciform DNA. In Wolbachia pipientis wMel, this protein is Crossover junction endodeoxyribonuclease RuvC.